The following is a 112-amino-acid chain: MDNTNRLRLRRGPSLRQTKFTRSRYDSEEVSSIEWEFISMTEQEEDLISRMYRLVGNRWDLIAGRVVGRKANEIERYWIMRNSDYFSHKRRRLNNSPFFSTSPLNLQENLKL.

The Myb-like domain occupies 41–78; the sequence is TEQEEDLISRMYRLVGNRWDLIAGRVVGRKANEIERYW.

Interacts with GL3. As to expression, expressed in stomatal guard mother cells, young stomata and trichomes of young leaves, and inflorescences.

The protein localises to the nucleus. MYB-type transcription factor involved in epidermal cell fate specification. Acts as a negative regulator of trichome development, by mediating lateral inhibition. Promotes the formation of hair developing cells in H position in root epidermis, probably by inhibiting non-hair cell formation. The polypeptide is MYB-like transcription factor ETC2 (ETC2) (Arabidopsis thaliana (Mouse-ear cress)).